Reading from the N-terminus, the 129-residue chain is Tumor necrosis factor receptor superfamily member 12A (129 aa).

Positions 1–27 are cleaved as a signal peptide; the sequence is MASAWPRSLPQILVLGFGLVLMRAAAG. At 28–80 the chain is on the extracellular side; sequence EQAPGTSPCSSGSSWSADLDKCMDCASCPARPHSDFCLGCAAAPPAHFRLLWP. 3 cysteine pairs are disulfide-bonded: cysteine 36-cysteine 49, cysteine 52-cysteine 67, and cysteine 55-cysteine 64. The TNFR-Cys; atypical repeat unit spans residues 36 to 67; the sequence is CSSGSSWSADLDKCMDCASCPARPHSDFCLGC. A helical membrane pass occupies residues 81-101; the sequence is ILGGALSLVLVLALVSSFLVW. The Cytoplasmic segment spans residues 102-129; the sequence is RRCRRREKFTTPIEETGGEGCPGVALIQ.

Associates with TRAF1 and TRAF2, and probably also with TRAF3. In terms of tissue distribution, highly expressed in fetal heart, intestine, kidney, liver, lung and skin, and in adult heart and ovary. Intermediate expression in adult kidney, lung and skin.

It is found in the membrane. In terms of biological role, receptor for TNFSF12/TWEAK. Weak inducer of apoptosis in some cell types. Promotes angiogenesis and the proliferation of endothelial cells. May modulate cellular adhesion to matrix proteins. In Mus musculus (Mouse), this protein is Tumor necrosis factor receptor superfamily member 12A (Tnfrsf12a).